A 233-amino-acid chain; its full sequence is Protein AC81 (233 aa).

A run of 2 helical transmembrane segments spans residues 171 to 191 (SFQT…VEKF) and 194 to 214 (INLL…NYII).

It is found in the host nucleus. The protein localises to the host membrane. The protein resides in the virion. Plays an essential role in the assembly of nucleocapsids with envelopes. The protein is Protein AC81 (AC81) of Autographa californica nuclear polyhedrosis virus (AcMNPV).